A 457-amino-acid chain; its full sequence is MATRIPGTVAASGVYYNDQYRMPCKLKGIHCMALNCIPQKAKVRKCMNGYQSTFRFCVNEKNGQTTGQSNGSLIQQGQNFRCHSYGSHNSSETKECSLEDGTDSYRDFEEHSRGASQFSDNQVAAKKKSVKSSQGLAEACKFVYNDAKFVNERAQNDILLLSRGITRLNKRACQDVAVLGSGFLKLDARARKDTKKIDHSVKERAARLTHFARILKEQAQSDLKKAADQHWSDGALEADLRRADSVVRRRAMEDAFMALKFVRDIHDMMANRLQEQFAKDGSSSPANSRSFITLEKNGNTFELFPHEVSTDQITAIEQAYWSMASALSEADGIDYTDPEELELLVATLIDLDAMDGKKSVSLLAECSSSPDVNTRKALANALAAAPSMWILGNAGMGALQRLAQDSNYAVARAATRAINELTKQWELEEGDSLRFVLNQNMVSKETADDSAAADDTR.

Residues 1 to 57 (MATRIPGTVAASGVYYNDQYRMPCKLKGIHCMALNCIPQKAKVRKCMNGYQSTFRFC) constitute a chloroplast transit peptide.

The protein belongs to the ATA15/OSA15 family. As to expression, expressed in leaves (at protein level).

The protein resides in the plastid. It is found in the chloroplast. May be involved in the regulation of leaf senescence. The sequence is that of Senescence-associated protein OSA15, chloroplastic from Oryza sativa subsp. japonica (Rice).